We begin with the raw amino-acid sequence, 175 residues long: Orotate phosphoribosyltransferase (175 aa).

5-phospho-alpha-D-ribose 1-diphosphate contacts are provided by residues Arg88, Lys89, Lys92, and 114-122 (EDVVTTARG). The orotate site is built by Thr118 and Arg146.

This sequence belongs to the purine/pyrimidine phosphoribosyltransferase family. PyrE subfamily. As to quaternary structure, homodimer. Mg(2+) serves as cofactor.

It carries out the reaction orotidine 5'-phosphate + diphosphate = orotate + 5-phospho-alpha-D-ribose 1-diphosphate. The protein operates within pyrimidine metabolism; UMP biosynthesis via de novo pathway; UMP from orotate: step 1/2. Catalyzes the transfer of a ribosyl phosphate group from 5-phosphoribose 1-diphosphate to orotate, leading to the formation of orotidine monophosphate (OMP). The chain is Orotate phosphoribosyltransferase from Methanocella arvoryzae (strain DSM 22066 / NBRC 105507 / MRE50).